Reading from the N-terminus, the 77-residue chain is Major pilus subunit operon regulatory protein (77 aa).

This sequence to E.coli AfaF and DaaF.

Its function is as follows. Plays a role in the inhibition of methylation at the GATC1028 site located in the regulatory region upstream of the pabA promoter. May, in conjunction with the Mbf (methylation blocking factor), inhibits deoxyadenosine methylase from methylating the GATC1028 site. In Escherichia coli, this protein is Major pilus subunit operon regulatory protein (papI).